The sequence spans 79 residues: Conotoxin PnMSGL-03 (79 aa).

Residues 1 to 20 (MSRLGIMVLTLLLLVFIVTS) form the signal peptide. Positions 21–44 (HQDAGEKQATQRDAINFRWRRSLI) are excised as a propeptide. Cystine bridges form between Cys-52–Cys-64, Cys-56–Cys-73, and Cys-63–Cys-77. The residue at position 78 (Leu-78) is a Leucine amide.

It belongs to the conotoxin O3 superfamily. In terms of tissue distribution, expressed by the venom duct.

It is found in the secreted. The protein is Conotoxin PnMSGL-03 of Conus pennaceus (Feathered cone).